Reading from the N-terminus, the 677-residue chain is Collagen alpha-2(IX) chain (677 aa).

The first 21 residues, 1-21 (MAHRSPALCLLLLHAACLCLA), serve as a signal peptide directing secretion. Positions 25-161 (GPPGEPGPRG…PGKPGPPGHI (137 aa)) are triple-helical region 4 (COL4). Residues 28–41 (GEPGPRGPPGPPGV) show a composition bias toward pro residues. Residues 28–516 (GEPGPRGPPG…MPGQRGVAGR (489 aa)) form a disordered region. Residues 53 to 66 (SPGAPGSPGAKGEP) show a composition bias toward low complexity. A compositionally biased stretch (pro residues) spans 68–77 (APGPDGPPGK). Positions 91–100 (GPWGGQGLKG) are enriched in gly residues. Composition is skewed to pro residues over residues 104-121 (LPGP…PPGL) and 137-158 (KGDP…PGPP). Position 158 is a 4-hydroxyproline (P158). Positions 162-178 (QGVEGSADFLCPTNCPP) are nonhelical region 4 (NC4). S167 carries O-linked (Xyl...) (glycosaminoglycan) serine glycosylation. P178 bears the 4-hydroxyproline mark. The triple-helical region 3 (COL3) stretch occupies residues 179–517 (GPKGPQGLQG…PGQRGVAGRD (339 aa)). K181 carries the 5-hydroxylysine modification. The O-linked (Gal...) hydroxylysine glycan is linked to K181. Position 190 is an allysine (K190). 3 stretches are compositionally biased toward low complexity: residues 363 to 382 (TPGL…AGVP), 430 to 442 (PGKT…TGDP), and 496 to 505 (RGLLGERGVP). Residues 518 to 547 (AGDQHIIDVVLKMMQEQLAEVAVSAKRAAL) are nonhelical region 3 (NC3). The tract at residues 548–630 (GGVGAMGPPG…PGLPGIPGHA (83 aa)) is triple-helical region 2 (COL2). A disordered region spans residues 550–657 (VGAMGPPGPP…GRPGSPGPAG (108 aa)). Over residues 555 to 565 (PPGPPGPPGPP) the composition is skewed to pro residues. A compositionally biased stretch (basic and acidic residues) spans 597 to 609 (KRGEKGERGDTGR). The segment at 631-632 (LA) is nonhelical region 2 (NC2). The segment at 633–662 (GKDGERGPPGVPGDAGRPGSPGPAGLPGFC) is triple-helical region 1 (COL1). The nonhelical region 1 (NC1) stretch occupies residues 663-677 (EPAACLGALPTPRHG).

This sequence belongs to the fibril-associated collagens with interrupted helices (FACIT) family. Heterotrimer of an alpha 1(IX), an alpha 2(IX) and an alpha 3(IX) chain. The chains are linked to each other by interchain disulfide bonds. Trimers are also cross-linked via hydroxylysines. Covalently linked to the telopeptides of type II collagen by lysine-derived cross-links. Post-translationally, prolines at the third position of the tripeptide repeating unit (G-X-Y) are hydroxylated in some or all of the chains.

The protein resides in the secreted. It localises to the extracellular space. It is found in the extracellular matrix. Functionally, structural component of hyaline cartilage and vitreous of the eye. The sequence is that of Collagen alpha-2(IX) chain (COL9A2) from Gallus gallus (Chicken).